The primary structure comprises 502 residues: Lysine--tRNA ligase (502 aa).

Mg(2+)-binding residues include Glu398 and Glu405.

The protein belongs to the class-II aminoacyl-tRNA synthetase family. As to quaternary structure, homodimer. The cofactor is Mg(2+).

It localises to the cytoplasm. It catalyses the reaction tRNA(Lys) + L-lysine + ATP = L-lysyl-tRNA(Lys) + AMP + diphosphate. This is Lysine--tRNA ligase (lysS) from Thermotoga maritima (strain ATCC 43589 / DSM 3109 / JCM 10099 / NBRC 100826 / MSB8).